A 283-amino-acid chain; its full sequence is DegV domain-containing protein BH3627 (283 aa).

A DegV domain is found at 4–281; sequence IAIVTDSTAY…EGSIGLSWYI (278 aa). Hexadecanoate contacts are provided by Thr-62 and Ser-95.

In terms of biological role, may bind long-chain fatty acids, such as palmitate, and may play a role in lipid transport or fatty acid metabolism. The chain is DegV domain-containing protein BH3627 from Halalkalibacterium halodurans (strain ATCC BAA-125 / DSM 18197 / FERM 7344 / JCM 9153 / C-125) (Bacillus halodurans).